Consider the following 196-residue polypeptide: Holliday junction branch migration complex subunit RuvA (196 aa).

Positions 1–63 are domain I; the sequence is MLDFIKGEIV…EETHQLFGFI (63 aa). A domain II region spans residues 64 to 142; that stretch reads DKKERQLFTH…PDNIPSSDTI (79 aa). Residues 143–146 are flexible linker; the sequence is ITNI. Positions 146 to 196 are domain III; that stretch reads ISSNITKEAITALITLGFSQSASQKVVNKIVSNNSSSTTIEQIIKKALKLL.

This sequence belongs to the RuvA family. In terms of assembly, homotetramer. Forms an RuvA(8)-RuvB(12)-Holliday junction (HJ) complex. HJ DNA is sandwiched between 2 RuvA tetramers; dsDNA enters through RuvA and exits via RuvB. An RuvB hexamer assembles on each DNA strand where it exits the tetramer. Each RuvB hexamer is contacted by two RuvA subunits (via domain III) on 2 adjacent RuvB subunits; this complex drives branch migration. In the full resolvosome a probable DNA-RuvA(4)-RuvB(12)-RuvC(2) complex forms which resolves the HJ.

The protein localises to the cytoplasm. Its function is as follows. The RuvA-RuvB-RuvC complex processes Holliday junction (HJ) DNA during genetic recombination and DNA repair, while the RuvA-RuvB complex plays an important role in the rescue of blocked DNA replication forks via replication fork reversal (RFR). RuvA specifically binds to HJ cruciform DNA, conferring on it an open structure. The RuvB hexamer acts as an ATP-dependent pump, pulling dsDNA into and through the RuvAB complex. HJ branch migration allows RuvC to scan DNA until it finds its consensus sequence, where it cleaves and resolves the cruciform DNA. The sequence is that of Holliday junction branch migration complex subunit RuvA from Azobacteroides pseudotrichonymphae genomovar. CFP2.